The following is a 216-amino-acid chain: GTP cyclohydrolase-2 (216 aa).

50–54 (RIHSE) contributes to the GTP binding site. Residues Cys-55, Cys-66, and Cys-68 each contribute to the Zn(2+) site. GTP is bound by residues Gln-71, 93–95 (EGR), and Thr-115. The Proton acceptor role is filled by Asp-127. The active-site Nucleophile is Arg-129. The GTP site is built by Thr-150 and Lys-155.

This sequence belongs to the GTP cyclohydrolase II family. The cofactor is Zn(2+).

The enzyme catalyses GTP + 4 H2O = 2,5-diamino-6-hydroxy-4-(5-phosphoribosylamino)-pyrimidine + formate + 2 phosphate + 3 H(+). It functions in the pathway cofactor biosynthesis; riboflavin biosynthesis; 5-amino-6-(D-ribitylamino)uracil from GTP: step 1/4. Functionally, catalyzes the conversion of GTP to 2,5-diamino-6-ribosylamino-4(3H)-pyrimidinone 5'-phosphate (DARP), formate and pyrophosphate. The chain is GTP cyclohydrolase-2 from Histophilus somni (strain 129Pt) (Haemophilus somnus).